Consider the following 291-residue polypeptide: GTP-binding protein RHO4 (291 aa).

Positions 14–31 (GNESNIVSQGSPSSSNLP) are enriched in polar residues. Residues 14 to 45 (GNESNIVSQGSPSSSNLPESPGTLDEKNLPRL) are disordered. 79–86 (GDGAVGKT) serves as a coordination point for GTP. An Effector region motif is present at residues 101–109 (YIPTIFENY). GTP-binding positions include 127–131 (DTAGQ) and 185–188 (LKSD). Residues 250–273 (THTIKNPFKRNTTRSDIDSSTGDT) are disordered. S264, S268, and S276 each carry phosphoserine. C288 is subject to Cysteine methyl ester. A lipid anchor (S-farnesyl cysteine) is attached at C288. The propeptide at 289 to 291 (IIM) is removed in mature form.

It belongs to the small GTPase superfamily. Rho family. In terms of assembly, interacts with BEM4.

The protein localises to the cell membrane. It catalyses the reaction GTP + H2O = GDP + phosphate + H(+). Functionally, plays an important role in cell growth. Required to keep the uninucleated state. May be involved in the organization of the cytoskeleton which affects microtubule functions. Most likely RHO3 and RHO4 of S.cerevisiae regulate partially overlapping but different pathways. The polypeptide is GTP-binding protein RHO4 (RHO4) (Saccharomyces cerevisiae (strain ATCC 204508 / S288c) (Baker's yeast)).